A 463-amino-acid chain; its full sequence is Toxin CaTX-A (463 aa).

A signal peptide spans 1–18; that stretch reads MSRGYSLHLVLFLVLSTA.

This sequence belongs to the jellyfish toxin family. Type II subfamily. In terms of assembly, oligomer. Contains disulfide bonds. As to expression, it is suggested that CaTX-B is synthesized in the tentacle, is modified (become CaTX-A) and then migrates to the nematocyst.

Its subcellular location is the secreted. It is found in the nematocyst. The protein localises to the target cell membrane. Has potent hemolytic activity. Is lethal to crayfish. Causes cutaneous inflammation in humans. May act as a pore-forming toxin, disrupting normal transmembrane ion concentration gradients in susceptible cells. This Carybdea alata (Hawaiian box jellyfish) protein is Toxin CaTX-A.